Here is a 542-residue protein sequence, read N- to C-terminus: CTP synthase (542 aa).

Residues 1 to 265 (MARYVFITGG…DSEVLAAFGI (265 aa)) form an amidoligase domain region. Serine 13 contacts CTP. A UTP-binding site is contributed by serine 13. 14-19 (SLGKGI) contacts ATP. Position 54 (tyrosine 54) interacts with L-glutamine. Residue aspartate 71 coordinates ATP. The Mg(2+) site is built by aspartate 71 and glutamate 139. CTP contacts are provided by residues 146–148 (DIE), 186–191 (KTKPTQ), and lysine 222. Residues 186–191 (KTKPTQ) and lysine 222 contribute to the UTP site. Residues 291 to 541 (TIAIVGKYTG…IAAAVEQSRL (251 aa)) form the Glutamine amidotransferase type-1 domain. Glycine 353 serves as a coordination point for L-glutamine. The active-site Nucleophile; for glutamine hydrolysis is the cysteine 380. Residues 381–384 (FGMQ), glutamate 404, and arginine 469 each bind L-glutamine. Catalysis depends on residues histidine 514 and glutamate 516.

It belongs to the CTP synthase family. Homotetramer.

The catalysed reaction is UTP + L-glutamine + ATP + H2O = CTP + L-glutamate + ADP + phosphate + 2 H(+). It carries out the reaction L-glutamine + H2O = L-glutamate + NH4(+). The enzyme catalyses UTP + NH4(+) + ATP = CTP + ADP + phosphate + 2 H(+). The protein operates within pyrimidine metabolism; CTP biosynthesis via de novo pathway; CTP from UDP: step 2/2. With respect to regulation, allosterically activated by GTP, when glutamine is the substrate; GTP has no effect on the reaction when ammonia is the substrate. The allosteric effector GTP functions by stabilizing the protein conformation that binds the tetrahedral intermediate(s) formed during glutamine hydrolysis. Inhibited by the product CTP, via allosteric rather than competitive inhibition. Functionally, catalyzes the ATP-dependent amination of UTP to CTP with either L-glutamine or ammonia as the source of nitrogen. Regulates intracellular CTP levels through interactions with the four ribonucleotide triphosphates. This chain is CTP synthase, found in Chelativorans sp. (strain BNC1).